The primary structure comprises 342 residues: UDP-N-acetylenolpyruvoylglucosamine reductase (342 aa).

The FAD-binding PCMH-type domain occupies Ile13 to Glu183. Arg159 is an active-site residue. A substrate-binding site is contributed by Tyr190. The active-site Proton donor is the Ser229. Glu325 is an active-site residue.

This sequence belongs to the MurB family. The cofactor is FAD.

The protein localises to the cytoplasm. The catalysed reaction is UDP-N-acetyl-alpha-D-muramate + NADP(+) = UDP-N-acetyl-3-O-(1-carboxyvinyl)-alpha-D-glucosamine + NADPH + H(+). Its pathway is cell wall biogenesis; peptidoglycan biosynthesis. Its function is as follows. Cell wall formation. This is UDP-N-acetylenolpyruvoylglucosamine reductase from Escherichia coli O6:H1 (strain CFT073 / ATCC 700928 / UPEC).